Reading from the N-terminus, the 311-residue chain is Homeobox-leucine zipper protein ATHB-6 (311 aa).

Over residues 1-10 (MMKRLSSSDS) the composition is skewed to polar residues. Residues 1–32 (MMKRLSSSDSVGGLISLCPTTSTDEQSPRRYG) form a disordered region. Residues 1–43 (MMKRLSSSDSVGGLISLCPTTSTDEQSPRRYGGREFQSMLEGY) are interaction with ABI1. A DNA-binding region (homeobox) is located at residues 59–118 (LSEKKRRLSINQVKALEKNFELENKLEPERKVKLAQELGLQPRQVAVWFQNRRARWKTKQ). Positions 119–154 (LEKDYGVLKTQYDSLRHNFDSLRRDNESLLQEISKL) are leucine-zipper. A disordered region spans residues 157-183 (KLNGGGGEEEEEENNAAVTTESDISVK). Positions 218 to 311 (LRDLLPLKAA…HWYSTVDHWN (94 aa)) are interaction with ABI1.

Belongs to the HD-ZIP homeobox family. Class I subfamily. Interacts with ABI1. In terms of processing, phosphorylated by PKA. Reversible inactivation of the binding to DNA by phosphorylation. As to expression, widely expressed.

The protein localises to the nucleus. In terms of biological role, transcription activator that may act as growth regulators in response to water deficit. Interacts with the core sequence 5'-CAATTATTA-3' of promoters in response to ABA and in an ABI1-dependent manner. Involved in the negative regulation of the ABA signaling pathway. The chain is Homeobox-leucine zipper protein ATHB-6 (ATHB-6) from Arabidopsis thaliana (Mouse-ear cress).